The sequence spans 153 residues: Small ribosomal subunit protein bS6 (153 aa).

The tract at residues E97–E153 is disordered. A compositionally biased stretch (basic and acidic residues) spans R105–E147.

This sequence belongs to the bacterial ribosomal protein bS6 family.

In terms of biological role, binds together with bS18 to 16S ribosomal RNA. This is Small ribosomal subunit protein bS6 from Bradyrhizobium sp. (strain BTAi1 / ATCC BAA-1182).